We begin with the raw amino-acid sequence, 319 residues long: Major intracellular serine protease (319 aa).

A propeptide spanning residues 1–17 is cleaved from the precursor; it reads MNGEIRLIPYVTNEQIM. The Peptidase S8 domain maps to 23–307; sequence PEGIKVIKAP…FLYLTAPDEL (285 aa). Active-site charge relay system residues include D50, H87, and S246.

This sequence belongs to the peptidase S8 family. As to quaternary structure, homodimer.

Its subcellular location is the cytoplasm. In terms of biological role, major intracellular protease produced by Bacillus subtilis. This chain is Major intracellular serine protease (isp), found in Bacillus subtilis (strain 168).